The primary structure comprises 168 residues: G/U mismatch-specific DNA glycosylase (168 aa).

This sequence belongs to the uracil-DNA glycosylase (UDG) superfamily. TDG/mug family. In terms of assembly, binds DNA as a monomer.

The protein resides in the cytoplasm. It catalyses the reaction Specifically hydrolyzes mismatched double-stranded DNA and polynucleotides, releasing free uracil.. In terms of biological role, excises ethenocytosine and uracil, which can arise by alkylation or deamination of cytosine, respectively, from the corresponding mispairs with guanine in ds-DNA. It is capable of hydrolyzing the carbon-nitrogen bond between the sugar-phosphate backbone of the DNA and the mispaired base. The complementary strand guanine functions in substrate recognition. Required for DNA damage lesion repair in stationary-phase cells. This is G/U mismatch-specific DNA glycosylase from Cronobacter sakazakii (strain ATCC BAA-894) (Enterobacter sakazakii).